The chain runs to 155 residues: Ribosomal RNA large subunit methyltransferase H (155 aa).

Residues leucine 72, glycine 103, and 122–127 (LSPLTF) each bind S-adenosyl-L-methionine.

The protein belongs to the RNA methyltransferase RlmH family. As to quaternary structure, homodimer.

The protein resides in the cytoplasm. It carries out the reaction pseudouridine(1915) in 23S rRNA + S-adenosyl-L-methionine = N(3)-methylpseudouridine(1915) in 23S rRNA + S-adenosyl-L-homocysteine + H(+). In terms of biological role, specifically methylates the pseudouridine at position 1915 (m3Psi1915) in 23S rRNA. This Alkalilimnicola ehrlichii (strain ATCC BAA-1101 / DSM 17681 / MLHE-1) protein is Ribosomal RNA large subunit methyltransferase H.